A 522-amino-acid chain; its full sequence is Chromosomal replication initiator protein DnaA (522 aa).

Residues 1–71 (MQDFWHAASA…QSLACDYWEM (71 aa)) are domain I, interacts with DnaA modulators. Positions 71–185 (MQVDVQFVLD…PVDDTVHERS (115 aa)) are domain II. The tract at residues 186–402 (RLNPILTFDN…GALRKILAYS (217 aa)) is domain III, AAA+ region. Residues Gly-230, Gly-232, Lys-233, and Thr-234 each contribute to the ATP site. A domain IV, binds dsDNA region spans residues 403 to 522 (NFHGKEITIE…LHVLEQTLKG (120 aa)).

It belongs to the DnaA family. In terms of assembly, oligomerizes as a right-handed, spiral filament on DNA at oriC.

Its subcellular location is the cytoplasm. Plays an essential role in the initiation and regulation of chromosomal replication. ATP-DnaA binds to the origin of replication (oriC) to initiate formation of the DNA replication initiation complex once per cell cycle. Binds the DnaA box (a 9 base pair repeat at the origin) and separates the double-stranded (ds)DNA. Forms a right-handed helical filament on oriC DNA; dsDNA binds to the exterior of the filament while single-stranded (ss)DNA is stabiized in the filament's interior. The ATP-DnaA-oriC complex binds and stabilizes one strand of the AT-rich DNA unwinding element (DUE), permitting loading of DNA polymerase. After initiation quickly degrades to an ADP-DnaA complex that is not apt for DNA replication. Binds acidic phospholipids. The polypeptide is Chromosomal replication initiator protein DnaA (Ralstonia nicotianae (strain ATCC BAA-1114 / GMI1000) (Ralstonia solanacearum)).